Reading from the N-terminus, the 142-residue chain is Transcriptional regulator MraZ (142 aa).

SpoVT-AbrB domains lie at 5 to 51 (ASAL…PRPE) and 77 to 120 (AMDV…DAQT).

Belongs to the MraZ family. As to quaternary structure, forms oligomers.

It is found in the cytoplasm. Its subcellular location is the nucleoid. This is Transcriptional regulator MraZ from Paraburkholderia xenovorans (strain LB400).